Consider the following 541-residue polypeptide: Putative nucleobase-ascorbate transporter 10 (541 aa).

12 helical membrane passes run L52–G72, V79–T99, L101–S121, I141–W161, I173–A193, V196–F216, G235–V255, S299–A319, R376–A396, F397–V417, F433–F453, and V476–L496.

The protein belongs to the nucleobase:cation symporter-2 (NCS2) (TC 2.A.40) family.

The protein resides in the membrane. The polypeptide is Putative nucleobase-ascorbate transporter 10 (NAT10) (Arabidopsis thaliana (Mouse-ear cress)).